The primary structure comprises 297 residues: MSPTPPRSKFPLPLDAVVQRKPAPARTAGMPAVGAPGPAQAQAKARDKQPSAPTAAASAVEARASAATAGGGGMASDRARGALAARLRASGIRDERVLAAIGTVPRHLFVEPGLASQAYEDAALPIGHQQTISKPSVVARMIELLREGLSADTPVERVLEIGTGCGYQAAVLSLVAREVFSIERIRPLHEQAKANLRPLRVPNLRLHYGDGMLGLPQAAPFSAIILAAAGMEVPQALLEQLAIGGRLIAPVAVVPPAGGSGQTVTQQLLLIERLNRHRFHRTALEAVFFVPLKSGTI.

The segment at 20–57 (RKPAPARTAGMPAVGAPGPAQAQAKARDKQPSAPTAAA) is disordered. Residues 28–43 (AGMPAVGAPGPAQAQA) are compositionally biased toward low complexity. The active site involves serine 133.

It belongs to the methyltransferase superfamily. L-isoaspartyl/D-aspartyl protein methyltransferase family.

It localises to the cytoplasm. The enzyme catalyses [protein]-L-isoaspartate + S-adenosyl-L-methionine = [protein]-L-isoaspartate alpha-methyl ester + S-adenosyl-L-homocysteine. Its function is as follows. Catalyzes the methyl esterification of L-isoaspartyl residues in peptides and proteins that result from spontaneous decomposition of normal L-aspartyl and L-asparaginyl residues. It plays a role in the repair and/or degradation of damaged proteins. This Cupriavidus pinatubonensis (strain JMP 134 / LMG 1197) (Cupriavidus necator (strain JMP 134)) protein is Protein-L-isoaspartate O-methyltransferase.